Here is a 118-residue protein sequence, read N- to C-terminus: Immunoglobulin heavy variable 4-31 (118 aa).

The first 19 residues, 1–19, serve as a signal peptide directing secretion; sequence MKHLWFFLLLVAAPRWVLS. The tract at residues 20–44 is framework-1; the sequence is QVQLQESGPGLVKPSQTLSLTCTVS. In terms of domain architecture, Ig-like spans 20 to 118; sequence QVQLQESGPG…ADTAVYYCAR (99 aa). The cysteines at positions 41 and 116 are disulfide-linked. Residues 45 to 54 are complementarity-determining-1; that stretch reads GGSISSGGYY. Residues 55–71 are framework-2; sequence WSWIRQHPGKGLEWIGY. The interval 72–78 is complementarity-determining-2; the sequence is IYYSGST. A framework-3 region spans residues 79-116; that stretch reads YYNPSLKSLVTISVDTSKNQFSLKLSSVTAADTAVYYC. Residues 117 to 118 form a complementarity-determining-3 region; that stretch reads AR.

Immunoglobulins are composed of two identical heavy chains and two identical light chains; disulfide-linked.

The protein localises to the secreted. The protein resides in the cell membrane. Functionally, v region of the variable domain of immunoglobulin heavy chains that participates in the antigen recognition. Immunoglobulins, also known as antibodies, are membrane-bound or secreted glycoproteins produced by B lymphocytes. In the recognition phase of humoral immunity, the membrane-bound immunoglobulins serve as receptors which, upon binding of a specific antigen, trigger the clonal expansion and differentiation of B lymphocytes into immunoglobulins-secreting plasma cells. Secreted immunoglobulins mediate the effector phase of humoral immunity, which results in the elimination of bound antigens. The antigen binding site is formed by the variable domain of one heavy chain, together with that of its associated light chain. Thus, each immunoglobulin has two antigen binding sites with remarkable affinity for a particular antigen. The variable domains are assembled by a process called V-(D)-J rearrangement and can then be subjected to somatic hypermutations which, after exposure to antigen and selection, allow affinity maturation for a particular antigen. The chain is Immunoglobulin heavy variable 4-31 from Homo sapiens (Human).